The following is a 134-amino-acid chain: Ribosome-binding factor A (134 aa).

Belongs to the RbfA family. In terms of assembly, monomer. Binds 30S ribosomal subunits, but not 50S ribosomal subunits or 70S ribosomes.

The protein localises to the cytoplasm. One of several proteins that assist in the late maturation steps of the functional core of the 30S ribosomal subunit. Associates with free 30S ribosomal subunits (but not with 30S subunits that are part of 70S ribosomes or polysomes). Required for efficient processing of 16S rRNA. May interact with the 5'-terminal helix region of 16S rRNA. This chain is Ribosome-binding factor A, found in Bartonella bacilliformis (strain ATCC 35685 / KC583 / Herrer 020/F12,63).